A 97-amino-acid polypeptide reads, in one-letter code: Aspartyl/glutamyl-tRNA(Asn/Gln) amidotransferase subunit C (97 aa).

Positions 74–97 are disordered; sequence AEQALDQAPASQRDRFEVPRILGE. Basic and acidic residues predominate over residues 85–97; sequence QRDRFEVPRILGE.

This sequence belongs to the GatC family. As to quaternary structure, heterotrimer of A, B and C subunits.

It catalyses the reaction L-glutamyl-tRNA(Gln) + L-glutamine + ATP + H2O = L-glutaminyl-tRNA(Gln) + L-glutamate + ADP + phosphate + H(+). The catalysed reaction is L-aspartyl-tRNA(Asn) + L-glutamine + ATP + H2O = L-asparaginyl-tRNA(Asn) + L-glutamate + ADP + phosphate + 2 H(+). Functionally, allows the formation of correctly charged Asn-tRNA(Asn) or Gln-tRNA(Gln) through the transamidation of misacylated Asp-tRNA(Asn) or Glu-tRNA(Gln) in organisms which lack either or both of asparaginyl-tRNA or glutaminyl-tRNA synthetases. The reaction takes place in the presence of glutamine and ATP through an activated phospho-Asp-tRNA(Asn) or phospho-Glu-tRNA(Gln). This chain is Aspartyl/glutamyl-tRNA(Asn/Gln) amidotransferase subunit C, found in Corynebacterium kroppenstedtii (strain DSM 44385 / JCM 11950 / CIP 105744 / CCUG 35717).